A 226-amino-acid chain; its full sequence is Gap junction beta-2 protein (226 aa).

Residues 2–13 (DWGALQTILGGV) lie within the membrane without spanning it. The Cytoplasmic portion of the chain corresponds to 14-20 (NKYSTSI). Residues 21-40 (GKIWLTVLFIFRIMILVVAA) traverse the membrane as a helical segment. The Extracellular segment spans residues 41–73 (KEVWGDEQADFVCNTLQPGCKNVCYDHYFPISH). Ca(2+) is bound by residues glutamate 42, glycine 45, and glutamate 47. 3 disulfides stabilise this stretch: cysteine 53-cysteine 180, cysteine 60-cysteine 174, and cysteine 64-cysteine 169. The helical transmembrane segment at 74-94 (IRLWALQLIFVSTPALLVAMH) threads the bilayer. Topologically, residues 95-135 (VAYRRHEKKRKFIKGEIKNEFKDIEEIKTQKVRIEGSLWWT) are cytoplasmic. Residues 136–156 (YTSSIFFRVVFEAAFMYVFYV) form a helical membrane-spanning segment. The Extracellular segment spans residues 157–189 (MYDGFSMQRLVKCNAWPCPNTVDCFVSRPTEKT). The chain crosses the membrane as a helical span at residues 190-210 (VFTVFMIAVSGICILLNVTEL). The Cytoplasmic portion of the chain corresponds to 211–226 (CYLLIRYCSGKSKKPV).

Belongs to the connexin family. Beta-type (group I) subfamily. As to quaternary structure, a hemichannel or connexon is composed of a hexamer of connexins. A functional gap junction is formed by the apposition of two hemichannels. Forms heteromeric channels with GJB4. Interacts with CNST.

The protein localises to the cell membrane. It localises to the cell junction. Its subcellular location is the gap junction. Its function is as follows. Structural component of gap junctions. Gap junctions are dodecameric channels that connect the cytoplasm of adjoining cells. They are formed by the docking of two hexameric hemichannels, one from each cell membrane. Small molecules and ions diffuse from one cell to a neighboring cell via the central pore. This is Gap junction beta-2 protein (GJB2) from Macaca mulatta (Rhesus macaque).